We begin with the raw amino-acid sequence, 484 residues long: Chromosomal replication initiator protein DnaA (484 aa).

Residues Met1–Thr73 are domain I, interacts with DnaA modulators. The domain II stretch occupies residues Thr73–Pro140. The interval Phe141–Ile357 is domain III, AAA+ region. Residues Gly185, Gly187, Lys188, and Thr189 each coordinate ATP. Residues Asp358–Asn484 are domain IV, binds dsDNA.

It belongs to the DnaA family. As to quaternary structure, oligomerizes as a right-handed, spiral filament on DNA at oriC.

It is found in the cytoplasm. In terms of biological role, plays an essential role in the initiation and regulation of chromosomal replication. ATP-DnaA binds to the origin of replication (oriC) to initiate formation of the DNA replication initiation complex once per cell cycle. Binds the DnaA box (a 9 base pair repeat at the origin) and separates the double-stranded (ds)DNA. Forms a right-handed helical filament on oriC DNA; dsDNA binds to the exterior of the filament while single-stranded (ss)DNA is stabiized in the filament's interior. The ATP-DnaA-oriC complex binds and stabilizes one strand of the AT-rich DNA unwinding element (DUE), permitting loading of DNA polymerase. After initiation quickly degrades to an ADP-DnaA complex that is not apt for DNA replication. Binds acidic phospholipids. In Borrelia duttonii (strain Ly), this protein is Chromosomal replication initiator protein DnaA.